Consider the following 323-residue polypeptide: MKSFISLLGLSFLTCHASAHYIFQSFTYKNIQYPPYGYIRVNDNYNSPVIDLASNDLRCNSGGETSKGTQTITVKAGDSFSFTGDIQVYHQGPLSIYMAKAPTTAAAFDGSGQVWFKILDIGPTFTNQVATWNLYQTYTYTIPPNLPNGDYLLRIQQLAIHNPYPGGIPQFYIECAQITVTNGGSGTPGPLVSIPGAFSDTDPGYTANIYSNFFNYTVPGPAVWASQGGSSAYTGISNGNNAATTLASMPAATGAATTATTIVTTTAAGSGSATKTGTSATATATGAVVQKFGQCGGQGWTGGTTCVAGSTCTATNAYYSQCL.

The first 19 residues, 1–19 (MKSFISLLGLSFLTCHASA), serve as a signal peptide directing secretion. Residues His-20 and His-90 each coordinate Cu(2+). Cys-59 and Cys-175 are disulfide-bonded. 2 residues coordinate O2: His-161 and Gln-170. Tyr-172 contributes to the Cu(2+) binding site. N-linked (GlcNAc...) asparagine glycosylation is present at Asn-215. Residues 287–323 (AVVQKFGQCGGQGWTGGTTCVAGSTCTATNAYYSQCL) form the CBM1 domain.

The protein belongs to the polysaccharide monooxygenase AA9 family. It depends on Cu(2+) as a cofactor.

It is found in the secreted. It catalyses the reaction [(1-&gt;4)-beta-D-glucosyl]n+m + reduced acceptor + O2 = 4-dehydro-beta-D-glucosyl-[(1-&gt;4)-beta-D-glucosyl]n-1 + [(1-&gt;4)-beta-D-glucosyl]m + acceptor + H2O.. Functionally, lytic polysaccharide monooxygenase (LPMO) that depolymerizes crystalline and amorphous polysaccharides via the oxidation of scissile alpha- or beta-(1-4)-glycosidic bonds, yielding C1 and C4 oxidation products. Catalysis by LPMOs requires the reduction of the active-site copper from Cu(II) to Cu(I) by a reducing agent and H(2)O(2) or O(2) as a cosubstrate. The sequence is that of AA9 family lytic polysaccharide monooxygenase A from Botryotinia fuckeliana (strain B05.10) (Noble rot fungus).